We begin with the raw amino-acid sequence, 580 residues long: MPFHVEGLVAIILFYLLIFLVGIWAAWKTKNSGNAEERSEAIIVGGRDIGLLVGGFTMTATWVGGGYINGTAEAVYGPGCGLAWAQAPIGYSLSLILGGLFFAKPMRSKGYVTMLDPFQQIYGKRMGGLLFIPALMGEMFWAAAIFSALGATISVIIDVDVNISVIVSALIAILYTLVGGLYSVAYTDVVQLFCIFIGLWISVPFALSHPAVTDIGFTAVHAKYQSPWLGTIESVEVYTWLDNFLLLMLGGIPWQAYFQRVLSSSSATYAQVLSFLAAFGCLVMALPAICIGAIGASTDWNQTAYGFPDPKTKEEADMILPIVLQYLCPVYISFFGLGAVSAAVMSSADSSILSASSMFARNIYQLSFRQNASDKEIVWVMRITVFVFGASATAMALLTKTVYGLWYLSSDLVYIIIFPQLLCVLFIKGTNTYGAVAGYIFGLFLRITGGEPYLYLQPLIFYPGYYPDKNGIYNQRFPFKTLSMVTSFFTNICVSYLAKYLFESGTLPPKLDIFDAVVSRHSEENMDKTILVRNENIKLNELAPVKPRQSLTLSSTFTNKEALLDVDSSPEGSGTEDNLQ.

Residues 1–6 are Extracellular-facing; sequence MPFHVE. A helical membrane pass occupies residues 7–27; it reads GLVAIILFYLLIFLVGIWAAW. Residues 28 to 48 are Cytoplasmic-facing; that stretch reads KTKNSGNAEERSEAIIVGGRD. A helical membrane pass occupies residues 49–69; the sequence is IGLLVGGFTMTATWVGGGYIN. Residues 70–81 are Extracellular-facing; that stretch reads GTAEAVYGPGCG. The helical transmembrane segment at 82-102 threads the bilayer; sequence LAWAQAPIGYSLSLILGGLFF. The Cytoplasmic segment spans residues 103–125; the sequence is AKPMRSKGYVTMLDPFQQIYGKR. A helical membrane pass occupies residues 126 to 146; sequence MGGLLFIPALMGEMFWAAAIF. The Extracellular portion of the chain corresponds to 147–164; that stretch reads SALGATISVIIDVDVNIS. The helical transmembrane segment at 165 to 185 threads the bilayer; the sequence is VIVSALIAILYTLVGGLYSVA. Residues 186–191 lie on the Cytoplasmic side of the membrane; that stretch reads YTDVVQ. A helical membrane pass occupies residues 192–212; it reads LFCIFIGLWISVPFALSHPAV. Topologically, residues 213–237 are extracellular; sequence TDIGFTAVHAKYQSPWLGTIESVEV. The helical transmembrane segment at 238 to 258 threads the bilayer; that stretch reads YTWLDNFLLLMLGGIPWQAYF. Over 259-274 the chain is Cytoplasmic; sequence QRVLSSSSATYAQVLS. Residues 275 to 295 traverse the membrane as a helical segment; that stretch reads FLAAFGCLVMALPAICIGAIG. Residues 296–317 are Extracellular-facing; that stretch reads ASTDWNQTAYGFPDPKTKEEAD. Residue Asn301 is glycosylated (N-linked (GlcNAc...) asparagine). The helical transmembrane segment at 318–338 threads the bilayer; it reads MILPIVLQYLCPVYISFFGLG. The Cytoplasmic portion of the chain corresponds to 339-376; the sequence is AVSAAVMSSADSSILSASSMFARNIYQLSFRQNASDKE. A helical transmembrane segment spans residues 377-397; that stretch reads IVWVMRITVFVFGASATAMAL. Residues 398 to 406 lie on the Extracellular side of the membrane; that stretch reads LTKTVYGLW. The chain crosses the membrane as a helical span at residues 407–427; sequence YLSSDLVYIIIFPQLLCVLFI. At 428 to 435 the chain is on the cytoplasmic side; it reads KGTNTYGA. Residues 436 to 456 traverse the membrane as a helical segment; the sequence is VAGYIFGLFLRITGGEPYLYL. Residues 457–481 lie on the Extracellular side of the membrane; that stretch reads QPLIFYPGYYPDKNGIYNQRFPFKT. Residues 482–502 form a helical membrane-spanning segment; it reads LSMVTSFFTNICVSYLAKYLF. A mediates interaction with SEC14L1 region spans residues 502-580; that stretch reads FESGTLPPKL…EGSGTEDNLQ (79 aa). The Cytoplasmic segment spans residues 503-580; sequence ESGTLPPKLD…EGSGTEDNLQ (78 aa). A Dileucine-like motif motif is present at residues 527 to 532; that stretch reads DKTILV.

This sequence belongs to the sodium:solute symporter (SSF) (TC 2.A.21) family. Homooligomerizes at cell surface. Interacts with SEC14L1; may regulate SLC5A7. Post-translationally, phosphorylated. In terms of tissue distribution, expressed in basal forebrain, brain stem, spinal chord, and striatum. Specific for cholinergic neurons.

It localises to the presynaptic cell membrane. Its subcellular location is the cell projection. The protein resides in the axon. The protein localises to the early endosome membrane. It is found in the cytoplasmic vesicle. It localises to the secretory vesicle. Its subcellular location is the synaptic vesicle membrane. The catalysed reaction is choline(out) + n Na(+)(out) = choline(in) + n Na(+)(in). With respect to regulation, choline uptake activity is regulated by SLC5A7/CHT1 internalization (inactive form) from the cell surface and recycling of internalized SLC5A7/CHT1 into the cell surface (active form). Activated by extracellular chloride ion. Specifically inhibited by nanomolar concentrations of hemicholinium 3. In terms of biological role, high-affinity Na(+)-coupled choline transmembrane symporter. Functions as an electrogenic, voltage-dependent transporter with variable charge/choline stoichiometry. Choline uptake and choline-induced current is also Cl(-)-dependent where Cl(-) is likely a regulatory ion rather than cotransported ion. Plays a critical role in acetylcholine (ACh) synthesis by taking up the substrate choline from the synaptic cleft into the presynaptic nerve terminals after neurotransmitter release. SLC5A7/CHT1-mediated choline high-affinity transport in cholinergic neurons is the rate-limiting step for production of ACh, thereby facilitating communication by subsequent action potentials. Localized predominantly in presynaptic terminal intracellular organelles, and translocated to the plasma membrane in active form in response to neuronal activity. The chain is High affinity choline transporter 1 from Rattus norvegicus (Rat).